The sequence spans 473 residues: Uronate isomerase (473 aa).

This sequence belongs to the metallo-dependent hydrolases superfamily. Uronate isomerase family.

The catalysed reaction is D-glucuronate = D-fructuronate. It catalyses the reaction aldehydo-D-galacturonate = keto-D-tagaturonate. It functions in the pathway carbohydrate metabolism; pentose and glucuronate interconversion. This is Uronate isomerase (uxaC) from Geobacillus stearothermophilus (Bacillus stearothermophilus).